The primary structure comprises 510 residues: Laccase (510 aa).

4 Plastocyanin-like domains span residues 45–79, 99–174, 242–317, and 372–506; these read PTKL…LPLK, KTVV…LISD, YLEV…IVLK, and LTLT…MRPM. Histidine 103, histidine 105, histidine 151, and histidine 153 together coordinate Cu cation. 8 residues coordinate Cu cation: histidine 419, histidine 422, histidine 424, histidine 491, cysteine 492, histidine 493, histidine 497, and methionine 502.

Belongs to the multicopper oxidase family. Requires Cu(2+) as cofactor.

It catalyses the reaction 4 hydroquinone + O2 = 4 benzosemiquinone + 2 H2O. Resistant to alkali and organic solvents such as methanol, ethanol and acetone. Resistant to EDTA, which might be explained by the spatial protection of copper ions in the active sites. Inhibited by DMSO. Strongly inhibited by Fe(2+) and DTT. In terms of biological role, multicopper oxidase that catalyzes the oxidation of a variety of substrates, including phenolic and non-phenolic compounds. Substrates include 2,6-dimethoxyphenol (2,6-DMP) and the non-phenolic compound 2,2'-azino-bis(3-ethylbenzothiazoline-6-sulfonic acid) (ABTS). Cannot use guaiacol and catechol. This Bacillus stratosphericus protein is Laccase.